Here is a 1037-residue protein sequence, read N- to C-terminus: Multidrug resistance protein MdtF (1037 aa).

Over 1–9 (MANYFIDRP) the chain is Cytoplasmic. The chain crosses the membrane as a helical span at residues 10-28 (VFAWVLAIIMMLAGGLAIM). The Periplasmic portion of the chain corresponds to 29–339 (NLPVAQYPQI…TPFIEISIQE (311 aa)). A helical membrane pass occupies residues 340-359 (VFKTLVEAIILVFLVMYLFL). Residues 360–365 (QNFRAT) are Cytoplasmic-facing. The chain crosses the membrane as a helical span at residues 366 to 385 (IIPTIAVPVVILGTFAILSA). Over 386–391 (VGFTIN) the chain is Periplasmic. A helical transmembrane segment spans residues 392 to 413 (TLTMFGMVLAIGLLVDDAIVVV). Topologically, residues 414–441 (ENVERVIAEDKLPPKEATHKSMGQIQRA) are cytoplasmic. A helical transmembrane segment spans residues 442–460 (LVGIAVVLSAVFMPMAFMS). The Periplasmic portion of the chain corresponds to 461-473 (GATGEIYRQFSIT). The chain crosses the membrane as a helical span at residues 474 to 496 (LISSMLLSVFVAMSLTPALCATI). Residues 497 to 536 (LKAAPEGGHKPNALFARFNTLFEKSTQHYTDSTRSLLRCT) are Cytoplasmic-facing. A helical membrane pass occupies residues 537 to 555 (GRYMVVYLLICAGMAVLFL). The Periplasmic segment spans residues 556–870 (RTPTSFLPEE…SYQEALSSNQ (315 aa)). The helical transmembrane segment at 871-890 (APALYAISLVVVFLALAALY) threads the bilayer. The Cytoplasmic portion of the chain corresponds to 891-896 (ESWSIP). Residues 897–916 (FSVMLVVPLGVVGALLATDL) form a helical membrane-spanning segment. Residues 917-922 (RGLSND) are Periplasmic-facing. The helical transmembrane segment at 923 to 944 (VYFQVGLLTTIGLSAKNAILIV) threads the bilayer. Topologically, residues 945–972 (EFAVEMMQKEGKTPIEAIIEAARMRLRP) are cytoplasmic. The helical transmembrane segment at 973–991 (ILMTSLAFILGVLPLVISH) threads the bilayer. Residues 992 to 1004 (GAGSGAQNAVGTG) are Periplasmic-facing. Residues 1005-1027 (VMGGMFAATVLAIYFVPVFFVVV) traverse the membrane as a helical segment. Residues 1028 to 1037 (EHLFARFKKA) are Cytoplasmic-facing.

The protein belongs to the resistance-nodulation-cell division (RND) (TC 2.A.6) family. As to quaternary structure, homotrimer. Part of the tripartite efflux system MdtEF-TolC, which is composed of an inner membrane transporter, MdtF, a membrane fusion protein, MdtE, and an outer membrane component, TolC. The complex forms a large protein conduit and can translocate molecules across both the inner and outer membranes.

It is found in the cell inner membrane. Its function is as follows. Part of the tripartite efflux system MdtEF-TolC, which confers resistance to compounds such as rhodamine 6G, erythromycin, doxorubicin, ethidium bromide, TPP, SDS, deoxycholate, crystal violet and benzalkonium. The chain is Multidrug resistance protein MdtF (mdtF) from Escherichia coli (strain K12).